A 122-amino-acid polypeptide reads, in one-letter code: Phosphoribosyl-ATP pyrophosphatase (122 aa).

It belongs to the PRA-PH family.

Its subcellular location is the cytoplasm. It catalyses the reaction 1-(5-phospho-beta-D-ribosyl)-ATP + H2O = 1-(5-phospho-beta-D-ribosyl)-5'-AMP + diphosphate + H(+). It participates in amino-acid biosynthesis; L-histidine biosynthesis; L-histidine from 5-phospho-alpha-D-ribose 1-diphosphate: step 2/9. The polypeptide is Phosphoribosyl-ATP pyrophosphatase (Burkholderia mallei (strain NCTC 10247)).